A 352-amino-acid polypeptide reads, in one-letter code: MKKINKIVLAVGGTGGHIIPALAARETFIHEDIEVLLLGKGLAHFLGDDSEVAYCDIPSGSPFSLRVNRMFSGAKQLYKGYVAALQKIRDFTPDLAIGFGSYHSLPAMLASIRSRIPLFLHEQNIVPGKVNKLFSRFAKGVGMSFAAAGEHFHCRAEEVFLPIRKLSEQIVFPGASPVICVVGGSQGAKILNDVVPKALARIRESYSNLYVHHIVGPKGDLQAVSQVYQDAGINHTVTAFDHNMLGVLQASDLVISRSGATMLNELLWVQVPAILIPYPGAYGHQEVNAKFFTHTVGGGTMILQKYLTEESLSKQVLLALDPATSENRRKAMLSAQQKKSFKSLYQFICESL.

UDP-N-acetyl-alpha-D-glucosamine contacts are provided by residues 14–16 (TGG), asparagine 124, arginine 164, serine 185, and glutamine 285.

Belongs to the glycosyltransferase 28 family. MurG subfamily.

It is found in the cell inner membrane. It catalyses the reaction di-trans,octa-cis-undecaprenyl diphospho-N-acetyl-alpha-D-muramoyl-L-alanyl-D-glutamyl-meso-2,6-diaminopimeloyl-D-alanyl-D-alanine + UDP-N-acetyl-alpha-D-glucosamine = di-trans,octa-cis-undecaprenyl diphospho-[N-acetyl-alpha-D-glucosaminyl-(1-&gt;4)]-N-acetyl-alpha-D-muramoyl-L-alanyl-D-glutamyl-meso-2,6-diaminopimeloyl-D-alanyl-D-alanine + UDP + H(+). The protein operates within cell wall biogenesis; peptidoglycan biosynthesis. Its function is as follows. Cell wall formation. Catalyzes the transfer of a GlcNAc subunit on undecaprenyl-pyrophosphoryl-MurNAc-pentapeptide (lipid intermediate I) to form undecaprenyl-pyrophosphoryl-MurNAc-(pentapeptide)GlcNAc (lipid intermediate II). This chain is UDP-N-acetylglucosamine--N-acetylmuramyl-(pentapeptide) pyrophosphoryl-undecaprenol N-acetylglucosamine transferase, found in Chlamydia trachomatis serovar A (strain ATCC VR-571B / DSM 19440 / HAR-13).